Consider the following 195-residue polypeptide: HTH-type transcriptional regulator BetI (195 aa).

The HTH tetR-type domain occupies Glu-8 to Leu-68. Residues Thr-31 to Phe-50 constitute a DNA-binding region (H-T-H motif).

It functions in the pathway amine and polyamine biosynthesis; betaine biosynthesis via choline pathway [regulation]. Functionally, repressor involved in the biosynthesis of the osmoprotectant glycine betaine. It represses transcription of the choline transporter BetT and the genes of BetAB involved in the synthesis of glycine betaine. This chain is HTH-type transcriptional regulator BetI, found in Burkholderia mallei (strain NCTC 10247).